The sequence spans 327 residues: GMP reductase (327 aa).

Residue Cys176 is the Thioimidate intermediate of the active site. 205–228 contributes to the NADP(+) binding site; that stretch reads IIADGGIRTHGDIAKSIRFGASMV.

Belongs to the IMPDH/GMPR family. GuaC type 2 subfamily.

The enzyme catalyses IMP + NH4(+) + NADP(+) = GMP + NADPH + 2 H(+). Catalyzes the irreversible NADPH-dependent deamination of GMP to IMP. It functions in the conversion of nucleobase, nucleoside and nucleotide derivatives of G to A nucleotides, and in maintaining the intracellular balance of A and G nucleotides. The sequence is that of GMP reductase from Streptococcus pyogenes serotype M6 (strain ATCC BAA-946 / MGAS10394).